Reading from the N-terminus, the 129-residue chain is ALK and LTK ligand 1 (129 aa).

Residues 1–27 (MRPLKPGAPLPALFLLALALSPHGAHG) form the signal peptide. A disordered region spans residues 24 to 63 (GAHGRPRGRRGARVTDKEPKPLLFLPAAGAGRTPSGSRSA). Basic residues predominate over residues 25–35 (AHGRPRGRRGA). Cystine bridges form between Cys-90-Cys-126 and Cys-104-Cys-113.

It belongs to the ALKAL family. In terms of tissue distribution, widely expressed with highest levels in thyroid and moderate levels in stomach, trachea, small intestine, prostate and brain.

Its subcellular location is the secreted. The protein resides in the cell membrane. Cytokine that acts as a physiological ligand for receptor tyrosine kinase LTK, leading to its activation. Monomeric ALKAL1 binds to LTK, leading to LTK homodimerization and activation. In contrast to ALKAL2, does not act as a potent physiological ligand for ALK. This Homo sapiens (Human) protein is ALK and LTK ligand 1.